A 932-amino-acid chain; its full sequence is MTNERKEVSEAPVNFGANLGLMLDLYDDFLQDPSSVPEDLQVLFSTIKNDDSIVPALKSTSSQNSDGTIKRVMRLIDNIRQYGHLKADIYPVNPPKRKHVPKLEIEDFDLDQQTLEGISAGIVSDHFADIYDNAYEAILRMEKRYKGPIAFEYTHINNNTERGWLKRRIETPYKVTLNNNEKRALFKQLAYVEGFEKYLHKNFVGAKRFSIEGVDALVPMLQRTITIAAKEGIKNIQIGMAHRGRLNVLTHVLEKPYEMMISEFMHTDPMKFLPEDGSLQLTAGWTGDVKYHLGGIKTTDSYGTMQRIALANNPSHLEIVAPVVEGRTRAAQDDTQRAGAPTTDHHKAMPIIIHGDAAYPGQGINFETMNLGNLKGYSTGGSLHIITNNRIGFTTEPIDARSTTYSTDVAKGYDVPIFHVNADDVEATIEAIDIAMEFRKEFHKDVVIDLVGYRRFGHNEMDEPSITNPVPYQNIRKHDSVEYVFGKKLVNEGIISEDEMHSFIEQVQKELRQAHDKINKADKMDNPDMEKPAELALPLQADEQSFTFDHLKEINDALLTYPDGFNILKKLNKVLEKRHEPFNKEDGLVDWAQAEQLAFATILQDGTPIRLTGQDSERGTFSHRHAVLHDEQTGETYTPLHHVPDQKATFDIHNSPLSEAAVVGFEYGYNVENKKSFNIWEAQYGDFANMSQMIFDNFLFSSRSKWGERSGLTLFLPHAYEGQGPEHSSARLERFLQLAAENNCTVVNLSSSSNYFHLLRAQAASLDSEQMRPLVVMSPKSLLRNKTVAKPIDEFTSGGFEPILTESYQADKVTKVILATGKMFIDLKEALAKNPDESVLLVAIERLYPFPEEEIEALLAQLPNLEEVSWVQEEPKNQGAWLYVYPYVKVLVADKYDLSYHGRIQRAAPAEGDGEIHKLVQNKIIENALKNN.

This sequence belongs to the alpha-ketoglutarate dehydrogenase family. Homodimer. Part of the 2-oxoglutarate dehydrogenase (OGDH) complex composed of E1 (2-oxoglutarate dehydrogenase), E2 (dihydrolipoamide succinyltransferase) and E3 (dihydrolipoamide dehydrogenase); the complex contains multiple copies of the three enzymatic components (E1, E2 and E3). It depends on thiamine diphosphate as a cofactor.

It carries out the reaction N(6)-[(R)-lipoyl]-L-lysyl-[protein] + 2-oxoglutarate + H(+) = N(6)-[(R)-S(8)-succinyldihydrolipoyl]-L-lysyl-[protein] + CO2. Its function is as follows. E1 component of the 2-oxoglutarate dehydrogenase (OGDH) complex which catalyzes the decarboxylation of 2-oxoglutarate, the first step in the conversion of 2-oxoglutarate to succinyl-CoA and CO(2). The protein is 2-oxoglutarate dehydrogenase E1 component of Staphylococcus aureus (strain MRSA252).